We begin with the raw amino-acid sequence, 293 residues long: Shikimate dehydrogenase (NADP(+)) (293 aa).

Shikimate contacts are provided by residues 20–22 (SLT) and threonine 72. Residue lysine 76 is the Proton acceptor of the active site. Residues asparagine 97 and aspartate 112 each coordinate shikimate. Residues 136–140 (GAGGA) and isoleucine 230 each bind NADP(+). Tyrosine 232 contacts shikimate. Glycine 253 contacts NADP(+).

It belongs to the shikimate dehydrogenase family. In terms of assembly, homodimer.

It catalyses the reaction shikimate + NADP(+) = 3-dehydroshikimate + NADPH + H(+). It participates in metabolic intermediate biosynthesis; chorismate biosynthesis; chorismate from D-erythrose 4-phosphate and phosphoenolpyruvate: step 4/7. In terms of biological role, involved in the biosynthesis of the chorismate, which leads to the biosynthesis of aromatic amino acids. Catalyzes the reversible NADPH linked reduction of 3-dehydroshikimate (DHSA) to yield shikimate (SA). This Pseudarthrobacter chlorophenolicus (strain ATCC 700700 / DSM 12829 / CIP 107037 / JCM 12360 / KCTC 9906 / NCIMB 13794 / A6) (Arthrobacter chlorophenolicus) protein is Shikimate dehydrogenase (NADP(+)).